The sequence spans 176 residues: ATP-dependent protease subunit HslV (176 aa).

T2 is a catalytic residue. The Na(+) site is built by G157, C160, and T163.

It belongs to the peptidase T1B family. HslV subfamily. A double ring-shaped homohexamer of HslV is capped on each side by a ring-shaped HslU homohexamer. The assembly of the HslU/HslV complex is dependent on binding of ATP.

It localises to the cytoplasm. It carries out the reaction ATP-dependent cleavage of peptide bonds with broad specificity.. Allosterically activated by HslU binding. Functionally, protease subunit of a proteasome-like degradation complex believed to be a general protein degrading machinery. The polypeptide is ATP-dependent protease subunit HslV (Pseudomonas entomophila (strain L48)).